The chain runs to 417 residues: Serine hydroxymethyltransferase (417 aa).

(6S)-5,6,7,8-tetrahydrofolate-binding positions include leucine 119 and 123-125 (GHL). At lysine 227 the chain carries N6-(pyridoxal phosphate)lysine.

This sequence belongs to the SHMT family. Homodimer. Requires pyridoxal 5'-phosphate as cofactor.

It is found in the cytoplasm. It carries out the reaction (6R)-5,10-methylene-5,6,7,8-tetrahydrofolate + glycine + H2O = (6S)-5,6,7,8-tetrahydrofolate + L-serine. It functions in the pathway one-carbon metabolism; tetrahydrofolate interconversion. Its pathway is amino-acid biosynthesis; glycine biosynthesis; glycine from L-serine: step 1/1. In terms of biological role, catalyzes the reversible interconversion of serine and glycine with tetrahydrofolate (THF) serving as the one-carbon carrier. This reaction serves as the major source of one-carbon groups required for the biosynthesis of purines, thymidylate, methionine, and other important biomolecules. Also exhibits THF-independent aldolase activity toward beta-hydroxyamino acids, producing glycine and aldehydes, via a retro-aldol mechanism. This Buchnera aphidicola subsp. Cinara cedri (strain Cc) protein is Serine hydroxymethyltransferase.